The primary structure comprises 423 residues: Serine hydroxymethyltransferase (423 aa).

(6S)-5,6,7,8-tetrahydrofolate-binding positions include Leu-120 and Gly-124–Leu-126. At Lys-229 the chain carries N6-(pyridoxal phosphate)lysine. Residue Ser-353–Phe-355 coordinates (6S)-5,6,7,8-tetrahydrofolate.

It belongs to the SHMT family. Homodimer. It depends on pyridoxal 5'-phosphate as a cofactor.

The protein localises to the cytoplasm. It carries out the reaction (6R)-5,10-methylene-5,6,7,8-tetrahydrofolate + glycine + H2O = (6S)-5,6,7,8-tetrahydrofolate + L-serine. Its pathway is one-carbon metabolism; tetrahydrofolate interconversion. It participates in amino-acid biosynthesis; glycine biosynthesis; glycine from L-serine: step 1/1. In terms of biological role, catalyzes the reversible interconversion of serine and glycine with tetrahydrofolate (THF) serving as the one-carbon carrier. This reaction serves as the major source of one-carbon groups required for the biosynthesis of purines, thymidylate, methionine, and other important biomolecules. Also exhibits THF-independent aldolase activity toward beta-hydroxyamino acids, producing glycine and aldehydes, via a retro-aldol mechanism. The polypeptide is Serine hydroxymethyltransferase (Synechococcus sp. (strain RCC307)).